The following is a 217-amino-acid chain: uncharacterized protein (217 aa).

An N-terminal signal peptide occupies residues methionine 1–alanine 32. Residue cysteine 33 is the site of N-palmitoyl cysteine attachment. Cysteine 33 is lipidated: S-diacylglycerol cysteine.

Belongs to the MG067/MG068/MG395 family.

It is found in the cell membrane. This is an uncharacterized protein from Mycoplasma pneumoniae (strain ATCC 29342 / M129 / Subtype 1) (Mycoplasmoides pneumoniae).